Reading from the N-terminus, the 173-residue chain is Photosystem I assembly protein Ycf3 (173 aa).

3 TPR repeats span residues 35 to 68 (AFAY…EDDP), 72 to 105 (SYIL…NPRM), and 120 to 153 (GEKA…APNN).

This sequence belongs to the Ycf3 family.

It localises to the cellular thylakoid membrane. In terms of biological role, essential for the assembly of the photosystem I (PSI) complex. May act as a chaperone-like factor to guide the assembly of the PSI subunits. The polypeptide is Photosystem I assembly protein Ycf3 (Trichodesmium erythraeum (strain IMS101)).